We begin with the raw amino-acid sequence, 299 residues long: 5,10-dihydrophenazine-1-carboxylate 9-dimethylallyltransferase (299 aa).

The protein belongs to the aromatic prenyltransferase family.

The enzyme catalyses 5,10-dihydrophenazine 1-carboxylate + dimethylallyl diphosphate = 5,10-dihydro-9-dimethylallylphenazine 1-carboxylate + diphosphate. Its pathway is antibiotic biosynthesis; phenazine biosynthesis. With respect to regulation, does not require magnesium or any other divalent metal ions for activity. Its function is as follows. Involved in the biosynthesis of prenylated phenazines. Catalyzes the transfer of a dimethylallyl moiety to C-9 of 5,10-dihydrophenazine 1-carboxylate (dihydro-PCA). Specific for both dimethylallyl diphosphate and dihydro-PCA. The sequence is that of 5,10-dihydrophenazine-1-carboxylate 9-dimethylallyltransferase from Streptomyces anulatus (Streptomyces chrysomallus).